The chain runs to 58 residues: MEKLTVKEMSQVVGGKYYGNGVSCNKKGCSVDWGKAIGIIGNNAAANLTTGGKAGWKG.

A propeptide spanning residues 1 to 15 (MEKLTVKEMSQVVGG) is cleaved from the precursor. A disulfide bridge links cysteine 24 with cysteine 29.

It is found in the secreted. Its function is as follows. Bacteriocin. The sequence is that of Enterocin-HF (entHF) from Enterococcus faecium (Streptococcus faecium).